A 216-amino-acid chain; its full sequence is Ribosomal RNA large subunit methyltransferase E (216 aa).

Residues G60, W62, D80, D96, and D121 each contribute to the S-adenosyl-L-methionine site. The active-site Proton acceptor is the K161.

This sequence belongs to the class I-like SAM-binding methyltransferase superfamily. RNA methyltransferase RlmE family.

The protein localises to the cytoplasm. The enzyme catalyses uridine(2552) in 23S rRNA + S-adenosyl-L-methionine = 2'-O-methyluridine(2552) in 23S rRNA + S-adenosyl-L-homocysteine + H(+). Specifically methylates the uridine in position 2552 of 23S rRNA at the 2'-O position of the ribose in the fully assembled 50S ribosomal subunit. This is Ribosomal RNA large subunit methyltransferase E from Pseudomonas savastanoi pv. phaseolicola (strain 1448A / Race 6) (Pseudomonas syringae pv. phaseolicola (strain 1448A / Race 6)).